The chain runs to 371 residues: Beta-1,3-galactosyltransferase 4 (371 aa).

The Cytoplasmic portion of the chain corresponds to 1–4 (MPLS). The chain crosses the membrane as a helical; Signal-anchor for type II membrane protein span at residues 5–25 (LFRRLLLAVLLLVIIWTLFGP). The Lumenal segment spans residues 26 to 371 (SGLGEELLSL…RCRFIAWLNS (346 aa)). An N-linked (GlcNAc...) asparagine glycan is attached at Asn-143. The tract at residues 187-208 (GGPSEQWQKGKEPQEETTAVHK) is disordered. Positions 194–207 (QKGKEPQEETTAVH) are enriched in basic and acidic residues.

The protein belongs to the glycosyltransferase 31 family. Highly expressed in thymus, spleen, kidney and testis and, to a lesser extent, in brain and liver.

Its subcellular location is the golgi apparatus membrane. It catalyses the reaction a ganglioside GM2 (d18:1(4E)) + UDP-alpha-D-galactose = a ganglioside GM1 (d18:1(4E)) + UDP + H(+). The catalysed reaction is a ganglioside GM2 + UDP-alpha-D-galactose = a ganglioside GM1 + UDP + H(+). The enzyme catalyses a ganglioside GD2 (d18:1(4E)) + UDP-alpha-D-galactose = a ganglioside GD1b (d18:1(4E)) + UDP + H(+). It carries out the reaction a ganglioside GA2 (d18:1(4E)) + UDP-alpha-D-galactose = a ganglioside GA1 (d18:1(4E)) + UDP + H(+). Its pathway is protein modification; protein glycosylation. Functionally, involved in GM1/GD1B/GA1 ganglioside biosynthesis. The chain is Beta-1,3-galactosyltransferase 4 (B3galt4) from Rattus norvegicus (Rat).